Consider the following 142-residue polypeptide: Protein tost-1 (142 aa).

The interval 97-123 (KVFEEEDKENAPTKKAVLKPSSTDEKK) is disordered.

As to quaternary structure, component of the tost-1 variant of the PETISCO complex (also called the pid-3, erh-2, tofu-6, and ife-3 small RNA complex) containing at least tost-1, tofu-6, ife-3, pid-3, and erh-2, which plays an essential role in embryogenesis. Within the complex interacts with erh-2. Within the complex interacts with pid-3 and tofu-6. In contrast to the pid-1 variant of the PETISCO complex, the tost-1 variant of the PETISCO complex plays a minor role in the biogenesis of a class of 21 nucleotide PIWI-interacting RNAs (piRNAs) that possess a uracil residue at the 5'-end (also called 21U-RNAs). As to expression, expressed in the germline.

The protein localises to the cytoplasm. Its subcellular location is the nucleus. In terms of biological role, component of the tost-1 variant of the PETISCO complex which plays an essential role in embryogenesis. Within the complex acts as an adapter which binds to the complex via erh-2. Does not seem to play a role in the biogenesis of a class of 21 nucleotide PIWI-interacting RNAs (piRNAs) that possess a uracil residue at the 5'-end (also called 21U-RNAs). May inhibit 21U-RNA accumulation. Required for chromosome segregation and cell division in early embryos. This chain is Protein tost-1, found in Caenorhabditis elegans.